Here is a 291-residue protein sequence, read N- to C-terminus: Elongation factor Ts (291 aa).

Residues 79-82 (TDFV) form an involved in Mg(2+) ion dislocation from EF-Tu region.

It belongs to the EF-Ts family.

The protein localises to the cytoplasm. Associates with the EF-Tu.GDP complex and induces the exchange of GDP to GTP. It remains bound to the aminoacyl-tRNA.EF-Tu.GTP complex up to the GTP hydrolysis stage on the ribosome. The sequence is that of Elongation factor Ts from Anaplasma marginale (strain Florida).